The sequence spans 291 residues: Bifunctional protein FolD (291 aa).

Residues 167–169 and S192 each bind NADP(+); that span reads GRS.

Belongs to the tetrahydrofolate dehydrogenase/cyclohydrolase family. As to quaternary structure, homodimer.

It catalyses the reaction (6R)-5,10-methylene-5,6,7,8-tetrahydrofolate + NADP(+) = (6R)-5,10-methenyltetrahydrofolate + NADPH. The catalysed reaction is (6R)-5,10-methenyltetrahydrofolate + H2O = (6R)-10-formyltetrahydrofolate + H(+). The protein operates within one-carbon metabolism; tetrahydrofolate interconversion. Catalyzes the oxidation of 5,10-methylenetetrahydrofolate to 5,10-methenyltetrahydrofolate and then the hydrolysis of 5,10-methenyltetrahydrofolate to 10-formyltetrahydrofolate. The chain is Bifunctional protein FolD from Leptospira biflexa serovar Patoc (strain Patoc 1 / Ames).